A 242-amino-acid polypeptide reads, in one-letter code: Type III pantothenate kinase (242 aa).

7–14 (DLGNSRFK) provides a ligand contact to ATP. Residues Tyr-91 and 98–101 (GVDR) contribute to the substrate site. The active-site Proton acceptor is Asp-100. Thr-121 lines the ATP pocket. Position 171 (Thr-171) interacts with substrate.

Belongs to the type III pantothenate kinase family. In terms of assembly, homodimer. Requires NH4(+) as cofactor. The cofactor is K(+).

It is found in the cytoplasm. The enzyme catalyses (R)-pantothenate + ATP = (R)-4'-phosphopantothenate + ADP + H(+). Its pathway is cofactor biosynthesis; coenzyme A biosynthesis; CoA from (R)-pantothenate: step 1/5. In terms of biological role, catalyzes the phosphorylation of pantothenate (Pan), the first step in CoA biosynthesis. The protein is Type III pantothenate kinase of Xanthomonas axonopodis pv. citri (strain 306).